A 335-amino-acid polypeptide reads, in one-letter code: Phosphate acyltransferase (335 aa).

Belongs to the PlsX family. In terms of assembly, homodimer. Probably interacts with PlsY.

The protein localises to the cytoplasm. It catalyses the reaction a fatty acyl-[ACP] + phosphate = an acyl phosphate + holo-[ACP]. It participates in lipid metabolism; phospholipid metabolism. Catalyzes the reversible formation of acyl-phosphate (acyl-PO(4)) from acyl-[acyl-carrier-protein] (acyl-ACP). This enzyme utilizes acyl-ACP as fatty acyl donor, but not acyl-CoA. The sequence is that of Phosphate acyltransferase from Streptococcus equi subsp. zooepidemicus (strain MGCS10565).